The chain runs to 75 residues: ATP synthase subunit c (75 aa).

Helical transmembrane passes span 9–29 (IGAG…GIIF) and 54–74 (FALA…ILFA).

This sequence belongs to the ATPase C chain family. F-type ATPases have 2 components, F(1) - the catalytic core - and F(0) - the membrane proton channel. F(1) has five subunits: alpha(3), beta(3), gamma(1), delta(1), epsilon(1). F(0) has three main subunits: a(1), b(2) and c(10-14). The alpha and beta chains form an alternating ring which encloses part of the gamma chain. F(1) is attached to F(0) by a central stalk formed by the gamma and epsilon chains, while a peripheral stalk is formed by the delta and b chains.

The protein localises to the cell inner membrane. F(1)F(0) ATP synthase produces ATP from ADP in the presence of a proton or sodium gradient. F-type ATPases consist of two structural domains, F(1) containing the extramembraneous catalytic core and F(0) containing the membrane proton channel, linked together by a central stalk and a peripheral stalk. During catalysis, ATP synthesis in the catalytic domain of F(1) is coupled via a rotary mechanism of the central stalk subunits to proton translocation. Functionally, key component of the F(0) channel; it plays a direct role in translocation across the membrane. A homomeric c-ring of between 10-14 subunits forms the central stalk rotor element with the F(1) delta and epsilon subunits. This Pelagibacter ubique (strain HTCC1062) protein is ATP synthase subunit c.